A 115-amino-acid polypeptide reads, in one-letter code: Ribosome-binding factor A (115 aa).

The protein belongs to the RbfA family. In terms of assembly, monomer. Binds 30S ribosomal subunits, but not 50S ribosomal subunits or 70S ribosomes.

It localises to the cytoplasm. In terms of biological role, one of several proteins that assist in the late maturation steps of the functional core of the 30S ribosomal subunit. Associates with free 30S ribosomal subunits (but not with 30S subunits that are part of 70S ribosomes or polysomes). Required for efficient processing of 16S rRNA. May interact with the 5'-terminal helix region of 16S rRNA. The sequence is that of Ribosome-binding factor A from Streptococcus gordonii (strain Challis / ATCC 35105 / BCRC 15272 / CH1 / DL1 / V288).